The primary structure comprises 480 residues: Trigger factor (480 aa).

The PPIase FKBP-type domain maps to 169–264 (GDIAVVDFKG…LKELKEKELP (96 aa)). Positions 441-480 (PEGSLSPAEETEAAESDADADVSQTEQENSEPSTTEVTEG) are disordered. Residues 449–460 (EETEAAESDADA) are compositionally biased toward acidic residues. The segment covering 462-480 (VSQTEQENSEPSTTEVTEG) has biased composition (polar residues).

Belongs to the FKBP-type PPIase family. Tig subfamily.

The protein resides in the cytoplasm. The catalysed reaction is [protein]-peptidylproline (omega=180) = [protein]-peptidylproline (omega=0). Functionally, involved in protein export. Acts as a chaperone by maintaining the newly synthesized protein in an open conformation. Functions as a peptidyl-prolyl cis-trans isomerase. This Nostoc punctiforme (strain ATCC 29133 / PCC 73102) protein is Trigger factor.